The chain runs to 551 residues: uncharacterized protein (551 aa).

Belongs to the GSP E family.

This is an uncharacterized protein from Methanocaldococcus jannaschii (strain ATCC 43067 / DSM 2661 / JAL-1 / JCM 10045 / NBRC 100440) (Methanococcus jannaschii).